The following is a 436-amino-acid chain: Probable mediator of RNA polymerase II transcription subunit 26b (436 aa).

The disordered stretch occupies residues 71-111 (PGDDEANRGTTGNGGGGTAVDEDYEVAGGSKESKANSSRGD). Positions 139 to 214 (KEVARIKEIL…AEWKELVDQW (76 aa)) constitute a TFIIS N-terminal domain. The segment at 263 to 376 (HFFDSLDFDG…PQQEKLKGLD (114 aa)) is disordered. 2 stretches are compositionally biased toward basic and acidic residues: residues 276–290 (NSEEHNTSREHERRP) and 332–350 (TEQRMKNETVSVHKSEKPM). The stretch at 382 to 402 (EFAKRKLQESYQHHENAKKQR) forms a coiled coil. Positions 408–436 (EMIPKQGSAQKPQLKRPGMSNRNWANGRK) are disordered. Over residues 427–436 (SNRNWANGRK) the composition is skewed to polar residues.

Belongs to the Mediator complex subunit 26 family. As to quaternary structure, component of the Mediator complex.

Its subcellular location is the nucleus. Its function is as follows. Component of the Mediator complex, a coactivator involved in the regulated transcription of nearly all RNA polymerase II-dependent genes. Mediator functions as a bridge to convey information from gene-specific regulatory proteins to the basal RNA polymerase II transcription machinery. The Mediator complex, having a compact conformation in its free form, is recruited to promoters by direct interactions with regulatory proteins and serves for the assembly of a functional preinitiation complex with RNA polymerase II and the general transcription factors. May play a role in transcription elongation. The sequence is that of Probable mediator of RNA polymerase II transcription subunit 26b (MED26B) from Arabidopsis thaliana (Mouse-ear cress).